The chain runs to 320 residues: D-alanine--D-alanine ligase (320 aa).

The ATP-grasp domain maps to 101–317 (KMIFQGAGLP…FSELVCKILS (217 aa)). 148–203 (INQLGLPLIVKPSREGSSFGMTKVEHLDQLDDALKKAWHYDEEILVEKWHFGTELT) contributes to the ATP binding site. Mg(2+) contacts are provided by Asp271, Glu284, and Asn286.

Belongs to the D-alanine--D-alanine ligase family. Requires Mg(2+) as cofactor. Mn(2+) serves as cofactor.

Its subcellular location is the cytoplasm. It catalyses the reaction 2 D-alanine + ATP = D-alanyl-D-alanine + ADP + phosphate + H(+). Its pathway is cell wall biogenesis; peptidoglycan biosynthesis. In terms of biological role, cell wall formation. The chain is D-alanine--D-alanine ligase from Hamiltonella defensa subsp. Acyrthosiphon pisum (strain 5AT).